A 582-amino-acid chain; its full sequence is ATP-dependent lipid A-core flippase (582 aa).

Helical transmembrane passes span 16-36 (LWPT…ALIL), 64-84 (LLWM…TSYI), 153-173 (IIGL…ILVV), 253-273 (PIIQ…ASFP), and 275-295 (VMDS…IALM). The 283-residue stretch at 28–310 (IVAGIALILN…LTNVNAQFQR (283 aa)) folds into the ABC transmembrane type-1 domain. An ABC transporter domain is found at 342–578 (LEFRNVTFTY…HGVYAQLHKM (237 aa)). 376-383 (GRSGSGKS) contacts ATP.

The protein belongs to the ABC transporter superfamily. Lipid exporter (TC 3.A.1.106) family. As to quaternary structure, homodimer.

It is found in the cell inner membrane. The enzyme catalyses ATP + H2O + lipid A-core oligosaccharideSide 1 = ADP + phosphate + lipid A-core oligosaccharideSide 2.. In terms of biological role, involved in lipopolysaccharide (LPS) biosynthesis. Translocates lipid A-core from the inner to the outer leaflet of the inner membrane. Transmembrane domains (TMD) form a pore in the inner membrane and the ATP-binding domain (NBD) is responsible for energy generation. In Salmonella choleraesuis (strain SC-B67), this protein is ATP-dependent lipid A-core flippase.